A 704-amino-acid chain; its full sequence is Pentatricopeptide repeat-containing protein At4g28010 (704 aa).

17 PPR repeats span residues Leu71 to Ile105, Asn106 to Phe140, Asn141 to Pro175, Asp176 to Trp210, Ser211 to Ala245, Asp246 to Pro280, Cys281 to Pro315, Asn316 to Pro350, Asn351 to Pro385, Asp386 to Asp416, Asp423 to Lys453, Asp458 to Arg492, Asn493 to Pro527, Ser528 to Pro562, Asp563 to Pro597, Asp598 to Pro632, and Asp633 to Leu667.

Belongs to the PPR family. P subfamily.

The chain is Pentatricopeptide repeat-containing protein At4g28010 from Arabidopsis thaliana (Mouse-ear cress).